Reading from the N-terminus, the 145-residue chain is Transcriptional regulator MraZ (145 aa).

SpoVT-AbrB domains follow at residues 7 to 54 (NATN…GPDL) and 83 to 126 (GVFM…QPQA).

This sequence belongs to the MraZ family. As to quaternary structure, forms oligomers.

Its subcellular location is the cytoplasm. The protein localises to the nucleoid. This is Transcriptional regulator MraZ from Rhizobium johnstonii (strain DSM 114642 / LMG 32736 / 3841) (Rhizobium leguminosarum bv. viciae).